A 204-amino-acid polypeptide reads, in one-letter code: Carbon disulfide hydrolase (204 aa).

Residues cysteine 35, histidine 88, and cysteine 91 each contribute to the Zn(2+) site.

The protein belongs to the beta-class carbonic anhydrase family. As to quaternary structure, forms a hexadecameric catenane homooligomer, through interactions of two interlocked octameric rings. Exists as both octamers and hexadecamers in solution. Zn(2+) serves as cofactor.

It catalyses the reaction carbon disulfide + 2 H2O = 2 hydrogen sulfide + CO2 + 2 H(+). It functions in the pathway sulfur metabolism; hydrogen sulfide biosynthesis. Catalyzes the conversion of carbon disulfide into hydrogen sulfide and carbon dioxide, with carbonyl sulfide as an intermediate. Likely plays a key role in sulfur metabolism that allows Acidianus sp. A1-3 to grow on carbon disulfide as the main carbon and energy source. Does not show carbonic anhydrase activity (hydration of CO(2) to carbonate). This is Carbon disulfide hydrolase from Acidianus sp. (strain A1-3).